Reading from the N-terminus, the 415-residue chain is Esterase FrsA (415 aa).

It belongs to the FrsA family.

It catalyses the reaction a carboxylic ester + H2O = an alcohol + a carboxylate + H(+). Its function is as follows. Catalyzes the hydrolysis of esters. This is Esterase FrsA from Vibrio parahaemolyticus serotype O3:K6 (strain RIMD 2210633).